We begin with the raw amino-acid sequence, 269 residues long: MFIFAAAFQQNTIIMSTTSNEASVIEVVPPNANCDKPKKKFQVVPVPGEFTRGRWKVIDTRFGSAMGEFGNYPPEDEYKMIVTSKNNVITVRKKFPRPTTVTSAPILGAEEADSIRVLQKSQPRFEQVPVTNQIKILIMDPETAVVTAGNTGSTASEVGTDFALTNDMTSSPSSVALLSGDPTKMEDSAKLATATSNTVVAIDNKIVQAMDLVKTHLTFAVREEVETLRTTITDLEARLNALREENRLLRENVSPEVLAFITANKQLCE.

The protein belongs to the TSC-22/Dip/Bun family.

The chain is Protein tsct-1 from Caenorhabditis elegans.